The following is a 147-amino-acid chain: UPF0306 protein YhbP (147 aa).

This sequence belongs to the UPF0306 family.

This chain is UPF0306 protein YhbP, found in Shigella boydii serotype 4 (strain Sb227).